The following is a 680-amino-acid chain: DNA-directed RNA polymerase subunit beta' (680 aa).

Residues Cys69, Cys71, Cys87, and Cys90 each contribute to the Zn(2+) site. Mg(2+) is bound by residues Asp489, Asp491, and Asp493.

Belongs to the RNA polymerase beta' chain family. RpoC1 subfamily. As to quaternary structure, in plastids the minimal PEP RNA polymerase catalytic core is composed of four subunits: alpha, beta, beta', and beta''. When a (nuclear-encoded) sigma factor is associated with the core the holoenzyme is formed, which can initiate transcription. Requires Mg(2+) as cofactor. Zn(2+) is required as a cofactor.

The protein resides in the plastid. Its subcellular location is the chloroplast. The enzyme catalyses RNA(n) + a ribonucleoside 5'-triphosphate = RNA(n+1) + diphosphate. Functionally, DNA-dependent RNA polymerase catalyzes the transcription of DNA into RNA using the four ribonucleoside triphosphates as substrates. This chain is DNA-directed RNA polymerase subunit beta', found in Lepidium virginicum (Virginia pepperweed).